The following is a 396-amino-acid chain: MRKLFTSESVTEGHPDKICDQISDAVLDAILEKDPYARVACEVAVTTGLVLVMGEITTKCYVDIPKIARDTIREIGYTRAKYGFDADTCAVITSIDEQSPDIAMGVDKALEAKLGEMTDDEIEAIGAGDQGMMFGFACDETPVLMPMPIYLAHKLARRLAYVRKGGILPYLRPDGKTQVTVEYEDDRPIRVDTIVVSTQHSPEVTHAQIEADVIEHVIKPIIPEGMLDKNTKIYINPTGRFVIGGPQGDSGLTGRKIIVDTYGGYARHGGGAFSGKDPTKVDRSATYAARYVAKNIVAAGLAKKCEVQLSYAIGVARPLSIRVDTFGTGKIDDEKIAEIVKRVFDLRPAAIIRDLDLRRPIYKKVAAYGHFGREDLDLPWERTDKVDIILKEAQNI.

His-14 provides a ligand contact to ATP. A Mg(2+)-binding site is contributed by Asp-16. Glu-42 provides a ligand contact to K(+). Glu-55 and Gln-98 together coordinate L-methionine. The interval 98–108 (QSPDIAMGVDK) is flexible loop. ATP is bound by residues 174–176 (DGK), 240–241 (RF), Asp-249, 255–256 (RK), Ala-272, and Lys-276. L-methionine is bound at residue Asp-249. An L-methionine-binding site is contributed by Lys-280.

The protein belongs to the AdoMet synthase family. Homotetramer; dimer of dimers. It depends on Mg(2+) as a cofactor. Requires K(+) as cofactor.

It localises to the cytoplasm. The enzyme catalyses L-methionine + ATP + H2O = S-adenosyl-L-methionine + phosphate + diphosphate. Its pathway is amino-acid biosynthesis; S-adenosyl-L-methionine biosynthesis; S-adenosyl-L-methionine from L-methionine: step 1/1. Its function is as follows. Catalyzes the formation of S-adenosylmethionine (AdoMet) from methionine and ATP. The overall synthetic reaction is composed of two sequential steps, AdoMet formation and the subsequent tripolyphosphate hydrolysis which occurs prior to release of AdoMet from the enzyme. This chain is S-adenosylmethionine synthase, found in Caldicellulosiruptor saccharolyticus (strain ATCC 43494 / DSM 8903 / Tp8T 6331).